The following is a 160-amino-acid chain: Large ribosomal subunit protein uL30m (160 aa).

Residues M1 to H34 constitute a mitochondrion transit peptide. The disordered stretch occupies residues K44–H64.

The protein belongs to the universal ribosomal protein uL30 family. In terms of assembly, component of the mitochondrial ribosome large subunit (39S) which comprises a 16S rRNA and about 50 distinct proteins.

Its subcellular location is the mitochondrion. This is Large ribosomal subunit protein uL30m (Mrpl30) from Mus musculus (Mouse).